Reading from the N-terminus, the 444-residue chain is Protein EVI2B (444 aa).

The first 23 residues, 1-23, serve as a signal peptide directing secretion; it reads MEFKYLVFIVLCQYLDNTFFSET. Residues 24-203 are Extracellular-facing; sequence EAITTEQQSL…GTAHKNNHNA (180 aa). 4 N-linked (GlcNAc...) asparagine glycosylation sites follow: Asn-63, Asn-94, Asn-104, and Asn-127. 2 stretches are compositionally biased toward polar residues: residues 104–131 and 160–171; these read NNSL…STGQ and THNQPTKSTPTI. The segment at 104–197 is disordered; sequence NNSLPQTSPS…EPPSGKGTAH (94 aa). The segment covering 177-187 has biased composition (pro residues); it reads TPPPPPPPLTS. A helical transmembrane segment spans residues 204–224; that stretch reads IAAILIGTIIISMLVAILMII. Topologically, residues 225 to 444 are cytoplasmic; it reads LWKYLRKPVL…SLPPPPTELL (220 aa). At Thr-250 the chain carries Phosphothreonine. Ser-269, Ser-272, Ser-279, and Ser-295 each carry phosphoserine. Composition is skewed to polar residues over residues 318-332 and 361-370; these read SEDS…TAVS and SPLPNDSINP. 2 disordered regions span residues 318 to 337 and 361 to 444; these read SEDS…DDAD and SPLP…TELL.

In terms of tissue distribution, expressed in myeloid and lymphoid progenitors and increased in mature hematopoietic populations with the highest levels in granulocytes.

It is found in the membrane. Its function is as follows. Required for granulocyte differentiation and functionality of hematopoietic progenitor cells through the control of cell cycle progression and survival of hematopoietic progenitor cells. The protein is Protein EVI2B of Mus musculus (Mouse).